A 701-amino-acid chain; its full sequence is Dynein axonemal intermediate chain 1 (701 aa).

Disordered regions lie at residues 1-45 (MPSK…VRPP) and 119-165 (EMVA…DIPA). Ser-124 and Ser-127 each carry phosphoserine. Over residues 136–155 (ENLEEEEEPKEGEGEAEAEA) the composition is skewed to acidic residues. 5 WD repeats span residues 382–422 (SSES…SQPC), 431–474 (KHTD…LVHI), 539–579 (AHNM…PMFI), 581–621 (DLNS…YEAI), and 629–668 (KKKNKITHVQFNPIHPIIIVGDDRGHIICLKLSPNLRKMP).

It belongs to the dynein intermediate chain family. In terms of assembly, consists of at least two heavy chains and a number of intermediate and light chains. Interacts with BICD2. Interacts with CFAP45 and CFAP52. Interacts with CFAP53.

The protein localises to the cytoplasm. It localises to the cytoskeleton. It is found in the cilium axoneme. In terms of biological role, part of the dynein complex of respiratory cilia. This Mus musculus (Mouse) protein is Dynein axonemal intermediate chain 1 (Dnai1).